Here is a 132-residue protein sequence, read N- to C-terminus: UPF0251 protein PTH_0588 (132 aa).

It belongs to the UPF0251 family.

The polypeptide is UPF0251 protein PTH_0588 (Pelotomaculum thermopropionicum (strain DSM 13744 / JCM 10971 / SI)).